A 223-amino-acid chain; its full sequence is Small ribosomal subunit protein uS3 (223 aa).

One can recognise a KH type-2 domain in the interval 39–108 (IRNFVKKNSY…NILINIVEVK (70 aa)).

This sequence belongs to the universal ribosomal protein uS3 family. Part of the 30S ribosomal subunit. Forms a tight complex with proteins S10 and S14.

Functionally, binds the lower part of the 30S subunit head. Binds mRNA in the 70S ribosome, positioning it for translation. In Clostridium botulinum (strain 657 / Type Ba4), this protein is Small ribosomal subunit protein uS3.